An 86-amino-acid polypeptide reads, in one-letter code: Small ribosomal subunit protein bS16 (86 aa).

The protein belongs to the bacterial ribosomal protein bS16 family.

The sequence is that of Small ribosomal subunit protein bS16 from Xanthomonas campestris pv. campestris (strain 8004).